The sequence spans 582 residues: MGQAAAITMPIDPRNLNTLWSSVLAESFVRLGLQTVVICPGSRSAPLAIAFAEHPEIDAIPILDERSAGFFALGRAKASHRPVALICSSGTAGANFYPAVIEAKESGVPLLVITADRPPELRQCHAGQAIDQLRLFGSYALWEAELALPVLDLGLLRYLRQTAQQAWQQALRGGPVHLNQPLREPLAPIADPATQTWLAQQWPGENFFAELLTAVPTPQIQQPLPPLPSQGLITVGPIAPEDPAAFVQAIAQLSAHLGWPVLSDAVTPLRQFADHCPRLISSYDLILRQPHWRASLQPEAVLQIGELPTSKELRLWLTEQTCPRWIVSPRPENFDPLHGSSHHLPVTVEAIAIPATIAPASDYSRQWQQAETAVQAAIAQHLAQVPDLTEPGIARLLSQHLPAQTPIFVANSTPIRDLEWFWLANDQRRSLYCSRGANGIDGTLSTAIGIAHQNRPSVLITGDLSLLHDSNGFLQRSQLQGHLTVVLIDNSGGGIFELLPIRDCGPSFEPFVATPQTVDFAALCQAYGVDYQAIATEAELIKAIQTLPTSGIRVLHLFTDRRQNAAWRRALFAELAAIPSQS.

This sequence belongs to the TPP enzyme family. MenD subfamily. As to quaternary structure, homodimer. Mg(2+) serves as cofactor. Requires Mn(2+) as cofactor. Thiamine diphosphate is required as a cofactor.

It catalyses the reaction isochorismate + 2-oxoglutarate + H(+) = 5-enolpyruvoyl-6-hydroxy-2-succinyl-cyclohex-3-ene-1-carboxylate + CO2. It functions in the pathway quinol/quinone metabolism; 1,4-dihydroxy-2-naphthoate biosynthesis; 1,4-dihydroxy-2-naphthoate from chorismate: step 2/7. Its pathway is cofactor biosynthesis; phylloquinone biosynthesis. In terms of biological role, catalyzes the thiamine diphosphate-dependent decarboxylation of 2-oxoglutarate and the subsequent addition of the resulting succinic semialdehyde-thiamine pyrophosphate anion to isochorismate to yield 2-succinyl-5-enolpyruvyl-6-hydroxy-3-cyclohexene-1-carboxylate (SEPHCHC). The chain is 2-succinyl-5-enolpyruvyl-6-hydroxy-3-cyclohexene-1-carboxylate synthase from Synechococcus elongatus (strain ATCC 33912 / PCC 7942 / FACHB-805) (Anacystis nidulans R2).